A 448-amino-acid polypeptide reads, in one-letter code: Nucleoprotein (448 aa).

The tract at residues 1-55 (MSFTPGKQSSSRASSGNRSGNGILKWADQSDQSRNVQTRGRRAQPKQTATSQQPS) is disordered. The span at 9-22 (SSSRASSGNRSGNG) shows a compositional bias: low complexity. 2 stretches are compositionally biased toward polar residues: residues 29-38 (QSDQSRNVQT) and 45-55 (PKQTATSQQPS). Residues 52 to 194 (QQPSAGNVVP…GYYIEGSGRS (143 aa)) form an RNA-binding region. Residues 61 to 190 (PYYSWFSGIT…VLPQGYYIEG (130 aa)) form the CoV N NTD domain. Arg106, Arg122, and Arg164 together coordinate RNA. 3 disordered regions span residues 157–231 (TPAD…VTPD), 266–298 (ILNKPRQKRSPNKQCTVQQCFGKRGPNQNFGGG), and 385–448 (GMMN…TSEI). Ser167 is modified (phosphoserine; by host). Thr174 is modified (phosphothreonine; by host). Ser191 carries the phosphoserine; by host modification. Residues 193–223 (RSAPNSRSTSRTSSRASSAGSRSRANSGNRT) are compositionally biased toward low complexity. In terms of domain architecture, CoV N CTD spans 259–384 (AKEIRQKILN…ENLNAYQQQD (126 aa)). Over residues 266 to 276 (ILNKPRQKRSP) the composition is skewed to basic residues. The dimerization stretch occupies residues 266–384 (ILNKPRQKRS…ENLNAYQQQD (119 aa)). Residue Ser390 is modified to Phosphoserine; by host. Residues 399-409 (QKNGQGENDNI) show a composition bias toward polar residues. Over residues 422–439 (KSRELTAEDISLLKKMDE) the composition is skewed to basic and acidic residues. Ser423 bears the Phosphoserine; by host mark. Thr427 carries the phosphothreonine; by host modification.

It belongs to the betacoronavirus nucleocapsid protein family. Homooligomer. Both monomeric and oligomeric forms interact with RNA. Interacts with protein M. Interacts with NSP3; this interaction serves to tether the genome to the newly translated replicase-transcriptase complex at a very early stage of infection. Post-translationally, ADP-ribosylated. The ADP-ribosylation is retained in the virion during infection. In terms of processing, phosphorylated on serine and threonine residues.

It localises to the virion. Its subcellular location is the host endoplasmic reticulum-Golgi intermediate compartment. The protein localises to the host Golgi apparatus. Functionally, packages the positive strand viral genome RNA into a helical ribonucleocapsid (RNP) and plays a fundamental role during virion assembly through its interactions with the viral genome and membrane protein M. Plays an important role in enhancing the efficiency of subgenomic viral RNA transcription as well as viral replication. This is Nucleoprotein from Bovine coronavirus (strain LSU-94LSS-051) (BCoV-LSU).